The following is a 192-amino-acid chain: Phosphomevalonate kinase (192 aa).

Residues 17–23 (KRKSGKD) and Arg141 each bind ATP. Position 170 (Asn170) interacts with substrate. ATP contacts are provided by His171, Arg176, and Gln180.

As to quaternary structure, monomer. Heart, liver, skeletal muscle, kidney, and pancreas. Lower level in brain, placenta and lung.

The protein localises to the cytoplasm. The protein resides in the cytosol. It catalyses the reaction (R)-5-phosphomevalonate + ATP = (R)-5-diphosphomevalonate + ADP. Its pathway is isoprenoid biosynthesis; isopentenyl diphosphate biosynthesis via mevalonate pathway; isopentenyl diphosphate from (R)-mevalonate: step 2/3. Its function is as follows. Catalyzes the reversible ATP-dependent phosphorylation of mevalonate 5-phosphate to produce mevalonate diphosphate and ADP, a key step in the mevalonic acid mediated biosynthesis of isopentenyl diphosphate and other polyisoprenoid metabolites. This chain is Phosphomevalonate kinase (PMVK), found in Homo sapiens (Human).